Reading from the N-terminus, the 543-residue chain is ATP-dependent ubiquitin transferase-like protein Cap2 (543 aa).

The segment at 1-159 is E2-like domain; the sequence is MSSAAAVADV…QNCIVAHANG (159 aa). Cys84 acts as the For E2-like domain in catalysis. A linker domain region spans residues 160–305; the sequence is CPLWFITDNE…YLAQRNMPNS (146 aa). The segment at 306–543 is adenylation plus E1-like domain; sequence KTLAGKNIAV…RDRECPLCNS (238 aa). Catalysis depends on for E1-like domain residues Cys450 and Cys453.

This sequence in the C-terminal section; belongs to the HesA/MoeB/ThiF family. In terms of assembly, forms a Cap2-CdnA complex. A Cap2 dimer is bound on either side by a CdnA monomer.

Its function is as follows. CD-NTase priming component of a CBASS antiviral system. CBASS (cyclic oligonucleotide-based antiphage signaling system) provides immunity against bacteriophages. The CD-NTase protein (CdnA) synthesizes cyclic nucleotides in response to infection; these serve as specific second messenger signals. The signals activate a diverse range of effectors, leading to bacterial cell death and thus abortive phage infection. A type II-A(GA) CBASS system. Functionally, acts as a protein transferase, conjugating CdnA, the CD-NTase, to unidentified target(s) in the cell probably via an E1-E2 ubiquitin transferase-like mechanism. This primes CdnA, upon phage infection CdnA activates and makes cyclic nucleotides. Protein conjugation requires ATP. The capV-cdnA-cap2-cap3 operon provides about 10(4)-fold protection in strain BWHPSA011 against infection by phage PaMx41. In P.aeruginosa strain PAO1 it confers protection against phages PaMx41 and JBD18 but not JBD67 (JBD18 and JBD67 do not replicate in BWHPSA011 / Pa011). When acb2 in JBD67 is deleted this CBASS operon then protects against JDB67 also. This CBASS system limits prophage induction of lysogenized JBD67 as well as viral lytic replication. In Pseudomonas aeruginosa (strain BWHPSA011 / Pa011), this protein is ATP-dependent ubiquitin transferase-like protein Cap2.